We begin with the raw amino-acid sequence, 79 residues long: Defensin-like protein 272 (79 aa).

Residues 1–24 (MSSKIKFVALLIVVISLLLNNAQS) form the signal peptide. Intrachain disulfides connect Cys-34-Cys-77, Cys-43-Cys-63, Cys-49-Cys-75, and Cys-53-Cys-76.

It belongs to the DEFL family.

Its subcellular location is the secreted. The chain is Defensin-like protein 272 from Arabidopsis thaliana (Mouse-ear cress).